Reading from the N-terminus, the 114-residue chain is Protein preY, mitochondrial (114 aa).

Residues 1-35 (MLSGARCRLASALRGTRAPPSAVARRCLHASGSRP) constitute a mitochondrion transit peptide. A disordered region spans residues 14 to 49 (RGTRAPPSAVARRCLHASGSRPLADRGKKTEEPPRD). Positions 36-49 (LADRGKKTEEPPRD) are enriched in basic and acidic residues. Positions 51–97 (DPALLEFLVCPLSKKPLRYEASTNELINEELGIAYPIIDGIPNMIPQ) constitute a TRM112 domain.

This sequence belongs to the PREY family. In terms of assembly, interacts (via TRM112 domain) with NDUFAF5; the interaction is direct and stabilizes NDUFAF5 protein. Interacts with COQ5; the interaction is direct, stabilizes COQ5 protein and associates PYURF with COQ enzyme complex.

The protein localises to the mitochondrion. Its function is as follows. In mitochondria, S-adenosylmethionine-dependent methyltransferase chaperone that supports both coenzyme Q biosynthesis, by stabilizing its components, such as COQ5, and NADH:ubiquinone oxidoreductase complex (complex I, MT-ND1) assembly, by stabilizing complex I assembly factors, such as NDUFAF5. This Homo sapiens (Human) protein is Protein preY, mitochondrial.